We begin with the raw amino-acid sequence, 174 residues long: Glycine-rich protein 5 (174 aa).

Positions 1 to 22 (MASKSLFLVALLVGSFAFTSFA) are cleaved as a signal peptide.

As to expression, mostly expressed in immature seed pods, and, to a lower extent, in stems and leaves. Present in phloem and epiderm in leaves, stems, flowers and fruits.

The protein localises to the vacuole. Involved in organ growth by promoting cell elongation processes. In Arabidopsis thaliana (Mouse-ear cress), this protein is Glycine-rich protein 5.